A 375-amino-acid chain; its full sequence is Putative F-box protein At5g52620 (375 aa).

One can recognise an F-box domain in the interval glycine 5–isoleucine 52.

The polypeptide is Putative F-box protein At5g52620 (Arabidopsis thaliana (Mouse-ear cress)).